The primary structure comprises 307 residues: Putative serine/threonine-protein phosphatase C22H10.04 (307 aa).

Residues aspartate 51, histidine 53, aspartate 79, and asparagine 111 each contribute to the Mn(2+) site. The active-site Proton donor is the histidine 112. 2 residues coordinate Mn(2+): histidine 161 and histidine 236.

The protein belongs to the PPP phosphatase family. PP-X subfamily. Requires Mn(2+) as cofactor.

It catalyses the reaction O-phospho-L-seryl-[protein] + H2O = L-seryl-[protein] + phosphate. It carries out the reaction O-phospho-L-threonyl-[protein] + H2O = L-threonyl-[protein] + phosphate. The sequence is that of Putative serine/threonine-protein phosphatase C22H10.04 from Schizosaccharomyces pombe (strain 972 / ATCC 24843) (Fission yeast).